Consider the following 148-residue polypeptide: Ubiquitin conjugating enzyme E2 B (148 aa).

Positions 2-148 (AAHKRLQKEI…AKEWTKKYAK (147 aa)) constitute a UBC core domain. Catalysis depends on cysteine 87, which acts as the Glycyl thioester intermediate.

Belongs to the ubiquitin-conjugating enzyme family. In terms of assembly, interacts with mkkA (via F-box/WD40 repeat domains).

It catalyses the reaction S-ubiquitinyl-[E1 ubiquitin-activating enzyme]-L-cysteine + [E2 ubiquitin-conjugating enzyme]-L-cysteine = [E1 ubiquitin-activating enzyme]-L-cysteine + S-ubiquitinyl-[E2 ubiquitin-conjugating enzyme]-L-cysteine.. It participates in protein modification; protein ubiquitination. Involved in protein ubiquitination and degradation during development. Mediates protein ubiquitination at the mound and finger stage required for subsequent development and may be an essential component of the developmental transition between the induction of postaggregative gene expression and subsequent cell-type differentiation and morphogenesis. ubcB and ubpB differentially control ubiquitination/deubiquitination and degradation of mkkA protein in a cell-type-specific and temporally regulated manner. The protein is Ubiquitin conjugating enzyme E2 B (ubcB) of Dictyostelium discoideum (Social amoeba).